Here is a 505-residue protein sequence, read N- to C-terminus: Phosphoglycerate kinase, glycosomal (505 aa).

(2R)-3-phosphoglycerate contacts are provided by Val-29, Asp-30, Phe-31, Asn-32, Arg-45, Ser-67, His-68, Gly-70, Arg-71, Leu-219, Arg-220, His-256, and Arg-257. Residues Gly-302 and Ala-303 each contribute to the ADP site. Residue Gly-302 participates in CDP binding. The AMP site is built by Ala-303 and Lys-304. Position 303 (Ala-303) interacts with ATP. Ala-303 is a Mg(2+) binding site. Residue Lys-304 coordinates (2R)-3-phosphoglycerate. Asp-307 contributes to the CDP binding site. Asp-307 is a Mg(2+) binding site. Positions 308 and 326 each coordinate ADP. AMP is bound at residue Lys-308. ATP is bound at residue Lys-308. Gly-326 provides a ligand contact to CDP. AMP contacts are provided by Gly-327 and Gly-399. ATP is bound by residues Gly-327 and Gly-399. The ADP site is built by Gly-399 and Asn-423. 3 residues coordinate CDP: Gly-424, Leu-426, and Phe-429. Residues Phe-429, Glu-430, Asp-462, and Thr-463 each coordinate ADP. An AMP-binding site is contributed by Glu-430. ATP contacts are provided by Glu-430, Asp-462, and Thr-463. Asp-462 serves as a coordination point for Mg(2+).

It belongs to the phosphoglycerate kinase family. As to quaternary structure, monomer. Requires Mg(2+) as cofactor.

Its subcellular location is the glycosome. It catalyses the reaction (2R)-3-phosphoglycerate + ATP = (2R)-3-phospho-glyceroyl phosphate + ADP. It participates in carbohydrate degradation; glycolysis; pyruvate from D-glyceraldehyde 3-phosphate: step 2/5. The sequence is that of Phosphoglycerate kinase, glycosomal (PGKA) from Crithidia fasciculata.